The following is a 674-amino-acid chain: Probable copper-transporting P-type ATPase B (674 aa).

The tract at residues 1–22 is disordered; sequence MNHSNQMHHDNHASHDHHSGHA. The span at 7–19 shows a compositional bias: basic and acidic residues; it reads MHHDNHASHDHHS. The next 6 helical transmembrane spans lie at 32 to 52, 57 to 77, 95 to 115, 127 to 147, 284 to 304, and 315 to 335; these read FFVS…MGVN, FTFP…FFYG, GMMT…LYAF, TMDF…GHWI, GYLF…WMLI, and LVTV…PLVT. The active-site 4-aspartylphosphate intermediate is the aspartate 367. Residues aspartate 565 and aspartate 569 each contribute to the Mg(2+) site. 2 helical membrane passes run 623–645 and 649–671; these read LWWG…AFIG and SPAI…AFTL.

The protein belongs to the cation transport ATPase (P-type) (TC 3.A.3) family. Type IB subfamily.

Its subcellular location is the cell membrane. The enzyme catalyses Cu(+)(in) + ATP + H2O = Cu(+)(out) + ADP + phosphate + H(+). In terms of biological role, involved in copper transport. The chain is Probable copper-transporting P-type ATPase B (copB) from Staphylococcus aureus (strain USA300 / TCH1516).